The sequence spans 115 residues: uncharacterized protein (115 aa).

One can recognise a CHCH domain in the interval 63–108 (GSPCGFEFREAITCQKTNSDGEIEQGACGKELMSFMECVTRTQCFG). 2 consecutive short sequence motifs (cx9C motif) follow at residues 66–76 (CGFEFREAITC) and 90–100 (CGKELMSFMEC). Intrachain disulfides connect cysteine 66/cysteine 100 and cysteine 76/cysteine 90.

This is an uncharacterized protein from Caenorhabditis elegans.